Reading from the N-terminus, the 305-residue chain is Catechol 1,2-dioxygenase (305 aa).

Fe cation contacts are provided by Tyr-163, Tyr-197, His-221, and His-223.

Belongs to the intradiol ring-cleavage dioxygenase family. Homodimer. The cofactor is Fe(3+).

It catalyses the reaction catechol + O2 = cis,cis-muconate + 2 H(+). It functions in the pathway aromatic compound metabolism; beta-ketoadipate pathway; 5-oxo-4,5-dihydro-2-furylacetate from catechol: step 1/3. This is Catechol 1,2-dioxygenase (catA) from Acinetobacter guillouiae (Acinetobacter genomosp. 11).